A 418-amino-acid polypeptide reads, in one-letter code: Endoglucanase EG-II (418 aa).

A signal peptide spans 1 to 21; sequence MNKSVAPLLLAASILYGGAVA. Residue Gln22 is modified to Pyrrolidone carboxylic acid. The CBM1 domain maps to 22–57; it reads QQTVWGQCGGIGWSGPTNCAPGSACSTLNPYYAQCI. Positions 58–91 are linker; that stretch reads PGATTITTSTRPPSGPTTTTRATSTSSSTPPTSS. Residues 63 to 91 form a disordered region; it reads ITTSTRPPSGPTTTTRATSTSSSTPPTSS. The interval 92–418 is catalytic; the sequence is GVRFAGVNIA…SLVSSCLARK (327 aa). A disulfide bridge connects residues Cys107 and Cys113. N-linked (GlcNAc) asparagine glycosylation is present at Asn124. Cys183 and Cys190 are joined by a disulfide. The active-site Proton donor/acceptor is Glu239. Intrachain disulfides connect Cys323-Cys359 and Cys364-Cys414. Glu350 serves as the catalytic Nucleophile.

Belongs to the glycosyl hydrolase 5 (cellulase A) family.

Its subcellular location is the secreted. The catalysed reaction is Endohydrolysis of (1-&gt;4)-beta-D-glucosidic linkages in cellulose, lichenin and cereal beta-D-glucans.. Endoglucanase (EG) that cleaves the internal beta-1,4-glucosidic bonds in cellulose. The degradation of cellulose involves an interplay between different cellulolytic enzymes. Hydrolysis starts with EGs, which cut internal glycosidic linkages to reduce the polymerization degree of the substrate and creates new chain ends for exocellobiohydrolases (CBHs). The CBH release the disaccharide cellobiose from the non-reducing end of the cellulose polymer chain. Finally, beta-1,4-glucosidases hydrolyze the cellobiose and other short cello-oligosaccharides into glucose units. The protein is Endoglucanase EG-II (egl2) of Hypocrea jecorina (Trichoderma reesei).